The primary structure comprises 342 residues: Transmembrane protein 268 (342 aa).

The tract at residues 1–30 is disordered; it reads MACEPQVDPGATGPLPPSSPGWSALPGGSP. The next 2 helical transmembrane spans lie at 105 to 125 and 132 to 152; these read AFAV…SQMF and AGML…VLVF.

Interacts with ITGAM; this interaction inhibits ITGAM degradation via the endosome-lysosome pathway. Interacts with ITGB4; this interaction prevents ITGB4 degradation.

The protein localises to the cell membrane. Stabilizes cell surface expression of ITGAM and participates in the adhesion and migration of phagocytes during bacterial clearance. This is Transmembrane protein 268 from Homo sapiens (Human).